A 205-amino-acid chain; its full sequence is Suppressor of silencing 2b (205 aa).

Residues 23–52 form a disordered region; the sequence is SEPQPSTTESRPSMPPINSGKPSVTEKPGV.

This sequence belongs to the cucumovirus/ilarvirus protein 2b family.

Its subcellular location is the host nucleus. Functionally, acts as a suppressor of RNA-mediated gene silencing, also known as post-transcriptional gene silencing (PTGS), a mechanism of plant viral defense that limits the accumulation of viral RNAs. May directly interfere with the mobile silencing signal. This Tobacco streak virus (strain WC) (TSV) protein is Suppressor of silencing 2b.